We begin with the raw amino-acid sequence, 673 residues long: MTDRFELVSPYSPAGDQPAAIDKLVANFEAGLAKQTLLGVTGSGKTYTIANVVQQVQKPTLVMAPNKTLAAQLYGEFKSFFPNNAVEYFVSYYDYYQPEAYVPSSDTFIEKDSSINEHIEQMRLSATKTLLSRRDSLVVATVSAIYGLGAPEDYLSLRLILSIGEHIDQRQLIRHLTDLQYTRNEFELTRGAFRVRGEVLDVFPAESDTEALRIELFDGDIEQLTLFDPLTGETLRKLQRYTVYPKTHYATTRERTLSAVDTIKEELKERLEQLYSQNKLVEAQRLAQRTQFDLEMMAEVGFCNGIENYSRHLTGKAPGEPPPTLFDYLPPDALLVIDESHVTIPQIGAMYKGDRSRKETLVEFGFRLPSALDNRPLRFEEWEARSPRSIYVSATPGPYELRESAGEITELVVRPTGLIDPVVEIRPVGTQVDDLMSEVHERIKLGDRVLVTTLTKRMAENLTEYLGEHGIRVRYLHSDIDTVERVEIIRDLRLGKFDVLVGINLLREGLDMPEVSLVAILDADKEGFLRSTGSLIQTIGRAARNLRGKAILYADKMTRSMQAAIDETDRRREKQVEYNLEHGITPKSVARPISDIMEGAREDAAEKKAGKGRSKSRQVAEEPADYRAMGPAEIAGKLKALEQKMYQHAKDLEFEAAAQIRDQILKLKAASLA.

The Helicase ATP-binding domain occupies 26-414 (ANFEAGLAKQ…AGEITELVVR (389 aa)). ATP is bound at residue 39-46 (GVTGSGKT). The short motif at 92 to 115 (YYDYYQPEAYVPSSDTFIEKDSSI) is the Beta-hairpin element. Residues 431–597 (QVDDLMSEVH…SVARPISDIM (167 aa)) enclose the Helicase C-terminal domain. The interval 601–626 (REDAAEKKAGKGRSKSRQVAEEPADY) is disordered. One can recognise a UVR domain in the interval 635 to 670 (AGKLKALEQKMYQHAKDLEFEAAAQIRDQILKLKAA).

The protein belongs to the UvrB family. Forms a heterotetramer with UvrA during the search for lesions. Interacts with UvrC in an incision complex.

The protein resides in the cytoplasm. Functionally, the UvrABC repair system catalyzes the recognition and processing of DNA lesions. A damage recognition complex composed of 2 UvrA and 2 UvrB subunits scans DNA for abnormalities. Upon binding of the UvrA(2)B(2) complex to a putative damaged site, the DNA wraps around one UvrB monomer. DNA wrap is dependent on ATP binding by UvrB and probably causes local melting of the DNA helix, facilitating insertion of UvrB beta-hairpin between the DNA strands. Then UvrB probes one DNA strand for the presence of a lesion. If a lesion is found the UvrA subunits dissociate and the UvrB-DNA preincision complex is formed. This complex is subsequently bound by UvrC and the second UvrB is released. If no lesion is found, the DNA wraps around the other UvrB subunit that will check the other stand for damage. The chain is UvrABC system protein B from Xanthomonas campestris pv. campestris (strain 8004).